Here is a 33-residue protein sequence, read N- to C-terminus: Rugosin-A (33 aa).

An intrachain disulfide couples cysteine 27 to cysteine 33.

The protein belongs to the frog skin active peptide (FSAP) family. Brevinin subfamily. As to expression, expressed by the skin glands.

It is found in the secreted. Functionally, has antibacterial activity against Gram-positive bacteria. The polypeptide is Rugosin-A (Glandirana rugosa (Japanese wrinkled frog)).